The primary structure comprises 76 residues: Omega/Kappa-hexatoxin-Hv1h (76 aa).

The signal sequence occupies residues 1–22; that stretch reads MNTATGFIVLLVLATILGGIEA. Positions 23–35 are excised as a propeptide; the sequence is GESHMRKDAMGRV. Cystine bridges form between C40/C55, C47/C60, and C54/C74.

The protein belongs to the neurotoxin 08 (Shiva) family. 02 (omega/kappa toxin) subfamily. Expressed by the venom gland.

It localises to the secreted. Toxin that may inhibit ion channels. This Hadronyche versuta (Blue mountains funnel-web spider) protein is Omega/Kappa-hexatoxin-Hv1h.